A 356-amino-acid polypeptide reads, in one-letter code: D-alanine--D-alanine ligase (356 aa).

The 206-residue stretch at Lys134–Glu339 folds into the ATP-grasp domain. Asn167 to Glu222 is an ATP binding site. Residues Asp293, Glu306, and Asn308 each contribute to the Mg(2+) site.

It belongs to the D-alanine--D-alanine ligase family. It depends on Mg(2+) as a cofactor. Mn(2+) serves as cofactor.

Its subcellular location is the cytoplasm. The enzyme catalyses 2 D-alanine + ATP = D-alanyl-D-alanine + ADP + phosphate + H(+). It participates in cell wall biogenesis; peptidoglycan biosynthesis. Cell wall formation. This Staphylococcus aureus (strain Mu3 / ATCC 700698) protein is D-alanine--D-alanine ligase.